Reading from the N-terminus, the 122-residue chain is Large ribosomal subunit protein uL14 (122 aa).

The protein belongs to the universal ribosomal protein uL14 family. Part of the 50S ribosomal subunit. Forms a cluster with proteins L3 and L19. In the 70S ribosome, L14 and L19 interact and together make contacts with the 16S rRNA in bridges B5 and B8.

Binds to 23S rRNA. Forms part of two intersubunit bridges in the 70S ribosome. In Mycobacterium leprae (strain TN), this protein is Large ribosomal subunit protein uL14.